Here is a 728-residue protein sequence, read N- to C-terminus: Putative auxin response factor 20 (728 aa).

Residues 119 to 233 (FFEKQLSPAD…ELLVGVRRAP (115 aa)) constitute a DNA-binding region (TF-B3 1). Low complexity-rich tracts occupy residues 665–689 (PQGSDEEAAAATTSTAHAGDATTSA) and 700–712 (ASSSSSSAPIIPS). The segment at 665 to 728 (PQGSDEEAAA…IVNPRDGSQG (64 aa)) is disordered.

Belongs to the ARF family. As to quaternary structure, homo and heterodimers.

It is found in the nucleus. Its function is as follows. Auxin response factors (ARFs) are transcriptional factors that bind specifically to the DNA sequence 5'-TGTCTC-3' found in the auxin-responsive promoter elements (AuxREs). This Oryza sativa subsp. japonica (Rice) protein is Putative auxin response factor 20 (ARF20).